Consider the following 325-residue polypeptide: DNA-directed RNA polymerase subunit alpha (325 aa).

The segment at 1 to 231 (MQTSLLKPKI…DQLSVFAALE (231 aa)) is alpha N-terminal domain (alpha-NTD). Positions 246–325 (IDPILLRPVD…ENWPPAGLDK (80 aa)) are alpha C-terminal domain (alpha-CTD).

Belongs to the RNA polymerase alpha chain family. As to quaternary structure, homodimer. The RNAP catalytic core consists of 2 alpha, 1 beta, 1 beta' and 1 omega subunit. When a sigma factor is associated with the core the holoenzyme is formed, which can initiate transcription.

The enzyme catalyses RNA(n) + a ribonucleoside 5'-triphosphate = RNA(n+1) + diphosphate. Functionally, DNA-dependent RNA polymerase catalyzes the transcription of DNA into RNA using the four ribonucleoside triphosphates as substrates. This is DNA-directed RNA polymerase subunit alpha from Burkholderia multivorans (strain ATCC 17616 / 249).